Here is a 70-residue protein sequence, read N- to C-terminus: DNA-directed RNA polymerase subunit omega (70 aa).

The protein belongs to the RNA polymerase subunit omega family. In terms of assembly, the RNAP catalytic core consists of 2 alpha, 1 beta, 1 beta' and 1 omega subunit. When a sigma factor is associated with the core the holoenzyme is formed, which can initiate transcription.

It catalyses the reaction RNA(n) + a ribonucleoside 5'-triphosphate = RNA(n+1) + diphosphate. Its function is as follows. Promotes RNA polymerase assembly. Latches the N- and C-terminal regions of the beta' subunit thereby facilitating its interaction with the beta and alpha subunits. The sequence is that of DNA-directed RNA polymerase subunit omega from Shouchella clausii (strain KSM-K16) (Alkalihalobacillus clausii).